Here is a 409-residue protein sequence, read N- to C-terminus: S-adenosylmethionine synthase (409 aa).

His15 serves as a coordination point for ATP. A Mg(2+)-binding site is contributed by Asp17. K(+) is bound at residue Glu43. Residues Glu56 and Gln100 each contribute to the L-methionine site. The flexible loop stretch occupies residues 100–110 (QSSDIAQGVNE). Residues 171–173 (DGK), 248–249 (KF), Asp257, 263–264 (RK), Ala280, and Lys284 each bind ATP. Asp257 lines the L-methionine pocket. Lys288 serves as a coordination point for L-methionine.

Belongs to the AdoMet synthase family. As to quaternary structure, homotetramer; dimer of dimers. Mg(2+) serves as cofactor. K(+) is required as a cofactor.

The protein resides in the cytoplasm. The enzyme catalyses L-methionine + ATP + H2O = S-adenosyl-L-methionine + phosphate + diphosphate. Its pathway is amino-acid biosynthesis; S-adenosyl-L-methionine biosynthesis; S-adenosyl-L-methionine from L-methionine: step 1/1. Functionally, catalyzes the formation of S-adenosylmethionine (AdoMet) from methionine and ATP. The overall synthetic reaction is composed of two sequential steps, AdoMet formation and the subsequent tripolyphosphate hydrolysis which occurs prior to release of AdoMet from the enzyme. In Prochlorococcus marinus (strain NATL2A), this protein is S-adenosylmethionine synthase.